The following is a 401-amino-acid chain: Probable 2,3-bisphosphoglycerate-independent phosphoglycerate mutase (401 aa).

The protein belongs to the BPG-independent phosphoglycerate mutase family. A-PGAM subfamily.

The catalysed reaction is (2R)-2-phosphoglycerate = (2R)-3-phosphoglycerate. It participates in carbohydrate degradation; glycolysis; pyruvate from D-glyceraldehyde 3-phosphate: step 3/5. In terms of biological role, catalyzes the interconversion of 2-phosphoglycerate and 3-phosphoglycerate. The protein is Probable 2,3-bisphosphoglycerate-independent phosphoglycerate mutase of Thermotoga petrophila (strain ATCC BAA-488 / DSM 13995 / JCM 10881 / RKU-1).